We begin with the raw amino-acid sequence, 216 residues long: Urease accessory protein UreG (216 aa).

25-32 (GPVGSGKT) lines the GTP pocket.

This sequence belongs to the SIMIBI class G3E GTPase family. UreG subfamily. As to quaternary structure, homodimer. UreD, UreF and UreG form a complex that acts as a GTP-hydrolysis-dependent molecular chaperone, activating the urease apoprotein by helping to assemble the nickel containing metallocenter of UreC. The UreE protein probably delivers the nickel.

The protein resides in the cytoplasm. Its function is as follows. Facilitates the functional incorporation of the urease nickel metallocenter. This process requires GTP hydrolysis, probably effectuated by UreG. This Burkholderia pseudomallei (strain 1710b) protein is Urease accessory protein UreG.